The following is a 377-amino-acid chain: Succinyl-diaminopimelate desuccinylase (377 aa).

His-68 lines the Zn(2+) pocket. The active site involves Asp-70. A Zn(2+)-binding site is contributed by Asp-101. The active-site Proton acceptor is the Glu-135. Zn(2+) is bound by residues Glu-136, Glu-164, and His-350.

The protein belongs to the peptidase M20A family. DapE subfamily. Homodimer. Requires Zn(2+) as cofactor. The cofactor is Co(2+).

It carries out the reaction N-succinyl-(2S,6S)-2,6-diaminopimelate + H2O = (2S,6S)-2,6-diaminopimelate + succinate. The protein operates within amino-acid biosynthesis; L-lysine biosynthesis via DAP pathway; LL-2,6-diaminopimelate from (S)-tetrahydrodipicolinate (succinylase route): step 3/3. In terms of biological role, catalyzes the hydrolysis of N-succinyl-L,L-diaminopimelic acid (SDAP), forming succinate and LL-2,6-diaminopimelate (DAP), an intermediate involved in the bacterial biosynthesis of lysine and meso-diaminopimelic acid, an essential component of bacterial cell walls. This is Succinyl-diaminopimelate desuccinylase from Vibrio cholerae serotype O1 (strain ATCC 39541 / Classical Ogawa 395 / O395).